Here is a 499-residue protein sequence, read N- to C-terminus: Isoflavone 2'-hydroxylase (499 aa).

Residue Cys436 coordinates heme.

Belongs to the cytochrome P450 family. Heme is required as a cofactor.

The protein localises to the membrane. It carries out the reaction a 2'-unsubstituted isoflavone + reduced [NADPH--hemoprotein reductase] + O2 = a 2'-hydroxyisoflavone + oxidized [NADPH--hemoprotein reductase] + H2O + H(+). In terms of biological role, catalyzes the hydroxylation of isoflavones, daidzein and formononetin, to yield 2'-hydroxyisoflavones, 2'-hydroxydaidzein, and 2'-hydroxyformononetin, respectively. The protein is Isoflavone 2'-hydroxylase (CYP81E1) of Glycyrrhiza echinata (Licorice).